Consider the following 289-residue polypeptide: Bis(5'-nucleosyl)-tetraphosphatase, symmetrical (289 aa).

Belongs to the Ap4A hydrolase family.

It carries out the reaction P(1),P(4)-bis(5'-adenosyl) tetraphosphate + H2O = 2 ADP + 2 H(+). In terms of biological role, hydrolyzes diadenosine 5',5'''-P1,P4-tetraphosphate to yield ADP. The sequence is that of Bis(5'-nucleosyl)-tetraphosphatase, symmetrical from Yersinia pseudotuberculosis serotype O:3 (strain YPIII).